A 2156-amino-acid chain; its full sequence is MLFFLDRMLAFPMNETFCCLWIACVFNSTLAQQGTESFQCDNGVSLPPDSICDFTDQCGDSSDERHCLNYERCDFEDGLCHMTQDQSLQPSWTKRSGMIGLSPPFYDHNGDVSAHFLSLVSRVDSISSSLRSRVFLPTNDQHDCQITFYYFSCQVSGKLMVGLQTACGGPIQHLWQNTAALPNQWERNVIKIQSSQRFQVVFEGQMASTYEQDEVIAIDDISFSSGCLPANDGILLCQEALNAERELCHPDTDLCRFDATDEELRLCQACGFEFDMCEWTSEASAGQISWMRTKAREIPAFESTPQQDQGGDDEGYYVWVGAKHGFTLNHLDSRAYLNSSVCHCLGKSCHLQFYYAMESSVLRVRLYNNKEEEIFWTYNISTHSQWVKADVLIPEDLKTFKIIFEGTLLSQRSFIALDHLWVYACGQTQSRKLCSADEFPCTSGQCIAKESVCDSRQDCSDESDEDPATCSKHLTCDFESGFCGWEPFLTEDSHWKLMKGLNNGEHHFPAADHTANINHGSFIYLEAQRSPGVAKLGSPVLTKLLTASTPCQVQFWYHLSQHSNLSVFTRTSLDGNLQKQGKIIRFSESQWSHAKIDLIAEAGESTLPFQLILEATVLSSNATVALDDISVSQECEISYKSLPRTSTQSKFSKCDFEANSCDWFEAISGDHFDWIRSSQSELSADFEHQAPPRDHSLNASQGHFMFILKKSSSLWQVAKLQSPTFSQTGPGCILSFWFYNYGLSVGAAELQLHMENSHDSTVIWRVLYNQGKQWLEATIQLGRLSQPFHLSLDKVSLGIYDGVSAIDDIRFENCTLPLPAESCEGLDHFWCRHTRACIEKLRLCDLVDDCGDRTDEVNCAPELQCNFETGICNWEQDAKDDFDWTRSQGPTPTLNTGPMKDNTLGTAKGHYLYIESSEPQAFQDSAALLSPILNATDTKGCTFRFYYHMFGKRIYRLAIYQRIWSDSRGQLLWQIFGNQGNRWIRKHLNISSRQPFQILVEASVGDGFTGDIAIDDLSFMDCTLYPGNLPADLPTPPETSVPVTLPPHNCTDNEFICRSDGHCIEKMQKCDFKYDCPDKSDEASCVMEVCSFEKRSLCKWYQPIPVHLLQDSNTFRWGLGNGISIHHGEENHRPSVDHTQNTTDGWYLYADSSNGKFGDTADILTPIISLTGPKCTLVFWTHMNGATVGSLQVLIKKDNVTSKLWAQTGQQGAQWKRAEVFLGIRSHTQIVFRAKRGISYIGDVAVDDISFQDCSPLLSPERKCTDHEFMCANKHCIAKDKLCDFVNDCADNSDETTFICRTSSGRCDFEFDLCSWKQEKDEDFDWNLKASSIPAAGTEPAADHTLGNSSGHYIFIKSLFPQQPMRAARISSPVISKRSKNCKIIFHYHMYGNGIGALTLMQVSVTNQTKVLLNLTVEQGNFWRREELSLFGDEDFQLKFEGRVGKGQRGDIALDDIVLTENCLSLHDSVQEELAVPLPTGFCPLGYRECHNGKCYRLEQSCNFVDNCGDNTDENECGSSCTFEKGWCGWQNSQADNFDWVLGVGSHQSLRPPKDHTLGNENGHFMYLEATAVGLRGDKAHFRSTMWRESSAACTMSFWYFVSAKATGSIQILIKTEKGLSKVWQESKQNPGNHWQKADILLGKLRNFEVIFQGIRTRDLGGGAAIDDIEFKNCTTVGEISELCPEITDFLCRDKKCIASHLLCDYKPDCSDRSDEAHCAHYTSTTGSCNFETSSGNWTTACSLTQDSEDDLDWAIGSRIPAKALIPDSDHTPGSGQHFLYVNSSGSKEGSVARITTSKSFPASLGMCTVRFWFYMIDPRSMGILKVYTIEESGLNILVWSVIGNKRTGWTYGSVPLSSNSPFKVAFEADLDGNEDIFIALDDISFTPECVTGGPVPVQPSPCEADQFSCIYTLQCVPLSGKCDGHEDCIDGSDEMDCPLSPTPPLCSNMEFPCSTDECIPSLLLCDGVPDCHFNEDELICSNKSCSNGALVCASSNSCIPAHQRCDGFADCMDFQLDESSCSECPLNYCRNGGTCVVEKNGPMCRCRQGWKGNRCHIKFNPPATDFTYAQNNTWTLLGIGLAFLMTHITVAVLCFLANRKVPIRKTEGSGNCAFVNPVYGNWSNPEKTESSVYSFSNPLYGTTSGSLETLSHHLK.

The signal sequence occupies residues 1 to 31; sequence MLFFLDRMLAFPMNETFCCLWIACVFNSTLA. Residues 32–2076 are Vesicular-facing; the sequence is QQGTESFQCD…FTYAQNNTWT (2045 aa). Residues 33–68 enclose the LDL-receptor class A 1 domain; the sequence is QGTESFQCDNGVSLPPDSICDFTDQCGDSSDERHCL. 2 cysteine pairs are disulfide-bonded: Cys40/Cys58 and Cys52/Cys67. MAM domains lie at 71–229 and 268–427; these read ERCD…GCLP and QACG…ACGQ. The 39-residue stretch at 433 to 471 folds into the LDL-receptor class A 2 domain; sequence LCSADEFPCTSGQCIAKESVCDSRQDCSDESDEDPATCS. 3 disulfides stabilise this stretch: Cys434/Cys446, Cys441/Cys459, and Cys453/Cys470. MAM domains are found at residues 474–637 and 652–816; these read LTCD…ECEI and SKCD…NCTL. N-linked (GlcNAc...) asparagine glycosylation is present at Asn813. Residues 822-860 enclose the LDL-receptor class A 3 domain; that stretch reads SCEGLDHFWCRHTRACIEKLRLCDLVDDCGDRTDEVNCA. Intrachain disulfides connect Cys823–Cys837, Cys831–Cys850, and Cys844–Cys859. The region spanning 863-1024 is the MAM 5 domain; it reads LQCNFETGIC…DDLSFMDCTL (162 aa). The N-linked (GlcNAc...) asparagine glycan is linked to Asn1049. Positions 1049–1086 constitute an LDL-receptor class A 4 domain; it reads NCTDNEFICRSDGHCIEKMQKCDFKYDCPDKSDEASCV. Cystine bridges form between Cys1050-Cys1063, Cys1057-Cys1076, and Cys1070-Cys1085. The MAM 6 domain occupies 1088-1256; sequence EVCSFEKRSL…DDISFQDCSP (169 aa). Asn1199 carries an N-linked (GlcNAc...) asparagine glycan. Residues 1263 to 1301 form the LDL-receptor class A 5 domain; the sequence is KCTDHEFMCANKHCIAKDKLCDFVNDCADNSDETTFICR. Intrachain disulfides connect Cys1264–Cys1276, Cys1271–Cys1289, and Cys1283–Cys1300. Positions 1305 to 1465 constitute an MAM 7 domain; that stretch reads GRCDFEFDLC…DIVLTENCLS (161 aa). Asn1414 carries N-linked (GlcNAc...) asparagine glycosylation. Residues 1482 to 1518 form the LDL-receptor class A 6 domain; it reads FCPLGYRECHNGKCYRLEQSCNFVDNCGDNTDENECG. Intrachain disulfides connect Cys1483/Cys1495, Cys1490/Cys1508, and Cys1502/Cys1517. In terms of domain architecture, MAM 8 spans 1519–1676; the sequence is SSCTFEKGWC…DDIEFKNCTT (158 aa). Residues 1683 to 1720 form the LDL-receptor class A 7 domain; sequence LCPEITDFLCRDKKCIASHLLCDYKPDCSDRSDEAHCA. Cystine bridges form between Cys1684-Cys1697, Cys1692-Cys1710, and Cys1704-Cys1719. Residues 1727 to 1892 form the MAM 9 domain; that stretch reads GSCNFETSSG…DISFTPECVT (166 aa). LDL-receptor class A domains lie at 1902–1939, 1946–1982, and 1985–2023; these read PCEA…MDCP, LCSN…LICS, and SCSN…SSCS. Cystine bridges form between Cys1903-Cys1916, Cys1910-Cys1929, Cys1923-Cys1938, Cys1947-Cys1959, Cys1954-Cys1972, Cys1966-Cys1981, Cys1986-Cys1999, Cys1993-Cys2012, Cys2006-Cys2022, Cys2025-Cys2036, Cys2030-Cys2045, and Cys2047-Cys2056. In terms of domain architecture, EGF-like spans 2024–2057; sequence ECPLNYCRNGGTCVVEKNGPMCRCRQGWKGNRCH. A helical membrane pass occupies residues 2077 to 2097; sequence LLGIGLAFLMTHITVAVLCFL. Topologically, residues 2098-2156 are cytoplasmic; sequence ANRKVPIRKTEGSGNCAFVNPVYGNWSNPEKTESSVYSFSNPLYGTTSGSLETLSHHLK.

As to quaternary structure, interacts with FGF19. In terms of tissue distribution, strongly expressed in the small intestine.

It is found in the cytoplasmic vesicle membrane. In terms of biological role, enhances production and/or transport of FGF19 and thus has a role in regulation of bile acid synthesis. The sequence is that of MAM and LDL-receptor class A domain-containing protein 1 from Homo sapiens (Human).